We begin with the raw amino-acid sequence, 339 residues long: Chromo domain-containing protein cec-3 (339 aa).

The interval 1–21 (MSNEGSREESREPEAREGKSD) is disordered. The 61-residue stretch at 24–84 (FEVEKILAHK…KLKVTDKTEL (61 aa)) folds into the Chromo domain. A compositionally biased stretch (basic residues) spans 91-105 (QIKKNKSQKSKKRSK). Disordered stretches follow at residues 91 to 199 (QIKK…APLS) and 215 to 272 (EEKA…QRTL). Basic and acidic residues-rich tracts occupy residues 106 to 117 (TVSDHESNHDSD) and 171 to 183 (AAME…RNWL). The segment covering 184-193 (DEESSDDEAE) has biased composition (acidic residues). Residues 230 to 241 (KPREVVIKKDPS) show a composition bias toward basic and acidic residues. The span at 242-251 (ESPVASASSV) shows a compositional bias: low complexity.

In terms of tissue distribution, expressed in every cell of the embryo (at protein level). In adults, expressed predominantly in the head region and the germline.

The protein localises to the chromosome. The protein resides in the nucleus. In terms of biological role, specifically recognizes and binds methylated 'Lys-9' of histone H3 (H3K9me), with highest preference for trimethylated 'Lys-9' (H3K9me3) followed by dimethylated 'Lys-9' (H3K9me2) followed by monomethylated 'Lys-9' (H3K9me1). Plays a role in maintaining correct unc-4 expression in the VC motor neurons where unc-4 is expressed in the vulval but not in the non-vulval VC neurons. The chain is Chromo domain-containing protein cec-3 (cec-3) from Caenorhabditis elegans.